The primary structure comprises 327 residues: MKPLSLKGHDRALTRVRINRDGDLLFSAGKDKSPCVWYMENGERIGTYDGHNGVIWDIDVSWDTRHFCSASGDVFVKLWNCETGDVINSVSTPTAARSISLSYSGNLIAFTTIKMTQNVASLFVYDIRDGSQMSGENQPTFRKSLQTQANSCVWTHLDDTVCVGNEKGNVHQYDIRKGDDIVNFNDEAHKFQINDMQMSTDESFLITASKDKTARLFDARTLDCLKTYKAERPVNSAAISPIRDHVILGGGEEAMKVTQTTAASGHFEAKLYHLVFEEEFARFKGHFGPINTLAFHPGGNCVVSGGEDGYVRIQEFDTDYLKFDYDF.

WD repeat units lie at residues 8 to 49 (GHDR…GTYD), 51 to 91 (HNGV…NSVS), 144 to 183 (SLQTQANSCVWTHLDDTVCVGNEKGNVHQYDIRKGDDIVN), 188 to 227 (AHKFQINDMQMSTDESFLITASKDKTARLFDARTLDCLKT), 229 to 268 (KAERPVNSAAISPIRDHVILGGGEEAMKVTQTTAASGHFE), and 285 to 324 (GHFGPINTLAFHPGGNCVVSGGEDGYVRIQEFDTDYLKFD).

It belongs to the eIF-3 subunit I family. Component of the eukaryotic translation initiation factor 3 (eIF-3) complex.

It localises to the cytoplasm. Functionally, component of the eukaryotic translation initiation factor 3 (eIF-3) complex, which is involved in protein synthesis of a specialized repertoire of mRNAs and, together with other initiation factors, stimulates binding of mRNA and methionyl-tRNAi to the 40S ribosome. The eIF-3 complex specifically targets and initiates translation of a subset of mRNAs involved in cell proliferation. In Brugia malayi (Filarial nematode worm), this protein is Eukaryotic translation initiation factor 3 subunit I.